Here is a 177-residue protein sequence, read N- to C-terminus: Large ribosomal subunit protein uL6 (177 aa).

Belongs to the universal ribosomal protein uL6 family. In terms of assembly, part of the 50S ribosomal subunit.

This protein binds to the 23S rRNA, and is important in its secondary structure. It is located near the subunit interface in the base of the L7/L12 stalk, and near the tRNA binding site of the peptidyltransferase center. The polypeptide is Large ribosomal subunit protein uL6 (Alkalilimnicola ehrlichii (strain ATCC BAA-1101 / DSM 17681 / MLHE-1)).